Consider the following 242-residue polypeptide: Probable transcriptional regulatory protein XAC3151 (242 aa).

Belongs to the TACO1 family.

It localises to the cytoplasm. The protein is Probable transcriptional regulatory protein XAC3151 of Xanthomonas axonopodis pv. citri (strain 306).